Here is a 473-residue protein sequence, read N- to C-terminus: MTRPVVTRFAPSPTGFLHIGGGRTALFNWLYARKHGGKMLLRIEDTDRQRSTQPAIDAILDGLKWLGIEWDGDTVYQFARAARHREVAEQLLAEGKAYRCYATAEELTAMRDKARAEGRSKLYDGSWRDRDPSDAPADLNPTIRLRAPLTGETVIEDQVQGRVVWQNENLDDLVLLRGDGTPTYMLAVVVDDHDMDVTHIIRGDDHLINAARQKQIYDAMGWELPVMAHIPLIHGPDGSKLSKRHGALGVDAYRAMGYLPAALRNYLVRLGWSHGDQELFTTQEMIDAFDLSAIGRSAARFDFAKLESLNGHYIRQTDDQSLVTLLEDLLHYVPQGPAIAARLTDTTRAQLLQAMPGLKERAKTLLELLDNAGFIFADRPLAVDTKGQTVLTPETRALIGRLRAALEDVSPWTAANTEAAMRTFAEQTGLKLGAVAQPLRVALTGRTTSPGIFDVLAVLGREECLSRLADQAA.

Residues 11–21 carry the 'HIGH' region motif; sequence PSPTGFLHIGG. The 'KMSKS' region motif lies at 240-244; it reads KLSKR. Lys243 contacts ATP.

This sequence belongs to the class-I aminoacyl-tRNA synthetase family. Glutamate--tRNA ligase type 1 subfamily. As to quaternary structure, monomer.

The protein resides in the cytoplasm. It carries out the reaction tRNA(Glu) + L-glutamate + ATP = L-glutamyl-tRNA(Glu) + AMP + diphosphate. Functionally, catalyzes the attachment of glutamate to tRNA(Glu) in a two-step reaction: glutamate is first activated by ATP to form Glu-AMP and then transferred to the acceptor end of tRNA(Glu). The chain is Glutamate--tRNA ligase from Rhodopseudomonas palustris (strain BisB5).